Reading from the N-terminus, the 536-residue chain is Feruloyl esterase B (536 aa).

Positions 1–20 are cleaved as a signal peptide; sequence MKTSIVLSIVALFLTSKASA. In terms of domain architecture, CBM10 spans 21 to 59; sequence DCWSERLGWPCCSDSNAEVIYVDDDGDWGVENNDWCGIQ. Residues 22 to 59 form a cellulose-binding region; sequence CWSERLGWPCCSDSNAEVIYVDDDGDWGVENNDWCGIQ. N65 carries an N-linked (GlcNAc...) asparagine glycan. Tandem repeats lie at residues 78–90, 91–103, 104–116, 117–129, 134–146, 151–163, 164–176, 181–193, 194–206, 211–223, 224–236, and 237–249. A 12 X 13 AA repeats of N-Q-G-G-G-M-[PQ]-W-G-D-F-G-G region spans residues 78-249; sequence NQGGGMPWGD…GGMQWGDFGG (172 aa). Positions 203–252 are enriched in gly residues; it reads DFGGNQGGNQGGGMPWGDFGGNQGGGMQWGDFGGNQGGGMQWGDFGGNQG. The interval 203-273 is disordered; that stretch reads DFGGNQGGNQ…SGPTVEYSTD (71 aa). The catalytic stretch occupies residues 257–536; the sequence is WGNQGGNSGP…WDFVKQFSLP (280 aa).

In terms of assembly, component of the multienzyme cellulase-hemicellulase complex.

It is found in the secreted. The catalysed reaction is feruloyl-polysaccharide + H2O = ferulate + polysaccharide.. Inhibited by the specific serine esterase inhibitor AEBSF. Functionally, involved in degradation of plant cell walls. Hydrolyzes of the feruloyl-arabinose ester bond in arabinoxylans as well as the feruloyl-galactose and feruloyl-arabinose ester bonds in pectin. This Piromyces equi protein is Feruloyl esterase B (ESTA).